The chain runs to 103 residues: MENIFFSKLTQVFIVALLCIFIYRTESAMSSHREQLSLTGRRMMANIPYPYGGIYVKPPPLKSKDSNQKGKRGETYYKPNSEIGTGPSHSGHGGSSIEHVSSP.

The first 25 residues, 1–25 (MENIFFSKLTQVFIVALLCIFIYRT), serve as a signal peptide directing secretion. The tract at residues 54-103 (IYVKPPPLKSKDSNQKGKRGETYYKPNSEIGTGPSHSGHGGSSIEHVSSP) is disordered. Residues 62 to 75 (KSKDSNQKGKRGET) show a composition bias toward basic and acidic residues. An SCOOP motif motif is present at residues 82-96 (EIGTGPSHSGHGGSS). A compositionally biased stretch (low complexity) spans 84-103 (GTGPSHSGHGGSSIEHVSSP). A SxS motif essential for MIK2 binding motif is present at residues 88 to 90 (SHS).

Belongs to the serine rich endogenous peptide (SCOOP) phytocytokine family. In terms of assembly, interacts with MIK2 (via extracellular leucine-rich repeat domain); this interaction triggers the formation of complex between MIK2 and the BAK1/SERK3 and SERK4 coreceptors, and subsequent BAK1 activation by phosphorylation. In terms of tissue distribution, mostly expressed in seedlings shoots and roots, and, to a lower extent, in leaves, but barely in flowers.

The protein localises to the cell membrane. It localises to the secreted. It is found in the extracellular space. The protein resides in the apoplast. Brassicaceae-specific phytocytokine (plant endogenous peptide released into the apoplast) perceived by MIK2 in a BAK1/SERK3 and SERK4 coreceptors-dependent manner, that modulates various physiological and antimicrobial processes including growth prevention and reactive oxygen species (ROS) response regulation. The chain is Serine rich endogenous peptide 9 from Arabidopsis thaliana (Mouse-ear cress).